The following is a 219-amino-acid chain: Lipoprotein-releasing system ATP-binding protein LolD (219 aa).

Positions 3–219 (IEARNIRKSF…HMRDGLLFSE (217 aa)) constitute an ABC transporter domain. An ATP-binding site is contributed by 35–42 (GTSGAGKT).

The protein belongs to the ABC transporter superfamily. Lipoprotein translocase (TC 3.A.1.125) family. The complex is composed of two ATP-binding proteins (LolD) and two transmembrane proteins (LolC and LolE).

It localises to the cell inner membrane. Functionally, part of the ABC transporter complex LolCDE involved in the translocation of mature outer membrane-directed lipoproteins, from the inner membrane to the periplasmic chaperone, LolA. Responsible for the formation of the LolA-lipoprotein complex in an ATP-dependent manner. The chain is Lipoprotein-releasing system ATP-binding protein LolD from Porphyromonas gingivalis (strain ATCC BAA-308 / W83).